An 860-amino-acid polypeptide reads, in one-letter code: Leucine--tRNA ligase (860 aa).

The 'HIGH' region signature appears at 42–52 (PYPSGRLHMGH). Residues 619–623 (KMSKS) carry the 'KMSKS' region motif. Lysine 622 lines the ATP pocket.

Belongs to the class-I aminoacyl-tRNA synthetase family.

The protein localises to the cytoplasm. The enzyme catalyses tRNA(Leu) + L-leucine + ATP = L-leucyl-tRNA(Leu) + AMP + diphosphate. This Escherichia coli O157:H7 protein is Leucine--tRNA ligase.